Consider the following 151-residue polypeptide: 3-dehydroquinate dehydratase (151 aa).

Y24 (proton acceptor) is an active-site residue. The substrate site is built by N76, H82, and D89. Residue H102 is the Proton donor of the active site. Substrate contacts are provided by residues 103–104 and R113; that span reads LS.

Belongs to the type-II 3-dehydroquinase family. Homododecamer.

It carries out the reaction 3-dehydroquinate = 3-dehydroshikimate + H2O. Its pathway is metabolic intermediate biosynthesis; chorismate biosynthesis; chorismate from D-erythrose 4-phosphate and phosphoenolpyruvate: step 3/7. Its function is as follows. Catalyzes a trans-dehydration via an enolate intermediate. The polypeptide is 3-dehydroquinate dehydratase (Acinetobacter baumannii (strain AB307-0294)).